Here is a 255-residue protein sequence, read N- to C-terminus: High-affinity branched-chain amino acid transport ATP-binding protein BraF (255 aa).

Residues L6–E254 enclose the ABC transporter domain. G38–T45 is a binding site for ATP.

Belongs to the ABC transporter superfamily.

The protein resides in the cell inner membrane. Its function is as follows. Component of the high affinity leucine, isoleucine, valine, transport system (LIV-I), which is operative without Na(+) and is specific for alanine and threonine, in addition to branched-chain amino acids. In Pseudomonas aeruginosa (strain ATCC 15692 / DSM 22644 / CIP 104116 / JCM 14847 / LMG 12228 / 1C / PRS 101 / PAO1), this protein is High-affinity branched-chain amino acid transport ATP-binding protein BraF (braF).